The sequence spans 352 residues: Ion-translocating oxidoreductase complex subunit D (352 aa).

4 helical membrane-spanning segments follow: residues 20–40, 42–62, 69–91, and 123–143; these read IMLL…WFFG, GTLF…AIVL, VASH…SIPP, and PAMI…TSWL. Thr187 carries the FMN phosphoryl threonine modification. Transmembrane regions (helical) follow at residues 215 to 235, 242 to 262, 267 to 287, 301 to 321, and 322 to 342; these read LAGV…VFLL, WHIP…GWLF, LASP…FFIL, LIFG…GGYP, and DGVA…DYYT.

The protein belongs to the NqrB/RnfD family. In terms of assembly, the complex is composed of six subunits: RsxA, RsxB, RsxC, RsxD, RsxE and RsxG. FMN is required as a cofactor.

Its subcellular location is the cell inner membrane. Functionally, part of a membrane-bound complex that couples electron transfer with translocation of ions across the membrane. Required to maintain the reduced state of SoxR. The protein is Ion-translocating oxidoreductase complex subunit D of Salmonella dublin (strain CT_02021853).